A 267-amino-acid polypeptide reads, in one-letter code: tRNA pseudouridine synthase A (267 aa).

Catalysis depends on Asp54, which acts as the Nucleophile. Tyr114 is a binding site for substrate.

This sequence belongs to the tRNA pseudouridine synthase TruA family. In terms of assembly, homodimer.

It carries out the reaction uridine(38/39/40) in tRNA = pseudouridine(38/39/40) in tRNA. Formation of pseudouridine at positions 38, 39 and 40 in the anticodon stem and loop of transfer RNAs. The polypeptide is tRNA pseudouridine synthase A (Tropheryma whipplei (strain Twist) (Whipple's bacillus)).